The sequence spans 224 residues: Jacalin-related lectin 24 (224 aa).

In terms of domain architecture, Jacalin-type lectin spans 8-160; sequence MFKVGPIGSK…LTSIGIYVYP (153 aa).

This sequence belongs to the jacalin lectin family.

This Arabidopsis thaliana (Mouse-ear cress) protein is Jacalin-related lectin 24 (JAL24).